We begin with the raw amino-acid sequence, 309 residues long: Olfactory receptor 1A2 (309 aa).

Over 1 to 25 the chain is Extracellular; the sequence is MKKENQSFNLDFILLGVTSQQEQNN. A glycan (N-linked (GlcNAc...) asparagine) is linked at Asn-5. The chain crosses the membrane as a helical span at residues 26 to 49; the sequence is VFFVIFLCIYPITLTGNLLIILAI. Residues 50–57 lie on the Cytoplasmic side of the membrane; sequence CADIRLHN. Residues 58–79 traverse the membrane as a helical segment; the sequence is PMYFLLANLSLVDIIFSSVTIP. At 80–100 the chain is on the extracellular side; the sequence is KVLANHLLGSKFISFGGCLMQ. A disulfide bridge connects residues Cys-97 and Cys-189. Residues 101 to 120 traverse the membrane as a helical segment; the sequence is MYFMIALAKADSYTLAAMAY. Topologically, residues 121–139 are cytoplasmic; that stretch reads DRAVAISCPLHYTTIMSPR. A helical transmembrane segment spans residues 140–158; sequence SCILLIAGSWVIGNTSALP. At 159–195 the chain is on the extracellular side; sequence HTLLTASLSFCGNQEVANFYCDIMPLLKLSCSDVHFN. The chain crosses the membrane as a helical span at residues 196–218; the sequence is VKMMYLGVGVFSLPLLCIIVSYV. At 219–235 the chain is on the cytoplasmic side; it reads QVFSTVFQVPSTKSLFK. A helical membrane pass occupies residues 236–258; it reads AFCTCGSHLTVVFLYYGTTMGMY. Residues 259–270 lie on the Extracellular side of the membrane; the sequence is FRPLTSYSPKDA. The chain crosses the membrane as a helical span at residues 271–290; that stretch reads VITVMYVAVTPALNPFIYSL. Over 291–309 the chain is Cytoplasmic; it reads RNWDMKAALQKLFSKRISS.

It belongs to the G-protein coupled receptor 1 family.

It is found in the cell membrane. Functionally, odorant receptor. This chain is Olfactory receptor 1A2 (OR1A2), found in Homo sapiens (Human).